A 419-amino-acid polypeptide reads, in one-letter code: Histidine--tRNA ligase (419 aa).

This sequence belongs to the class-II aminoacyl-tRNA synthetase family. As to quaternary structure, homodimer.

The protein resides in the cytoplasm. It catalyses the reaction tRNA(His) + L-histidine + ATP = L-histidyl-tRNA(His) + AMP + diphosphate + H(+). This Trichlorobacter lovleyi (strain ATCC BAA-1151 / DSM 17278 / SZ) (Geobacter lovleyi) protein is Histidine--tRNA ligase.